A 113-amino-acid chain; its full sequence is Cytochrome c2 (113 aa).

Heme c-binding residues include cysteine 15, cysteine 18, histidine 19, and methionine 92.

The protein belongs to the cytochrome c family. Post-translationally, binds 1 heme c group covalently per subunit.

Cytochrome c2 is found mainly in purple, non-sulfur, photosynthetic bacteria where it functions as the electron donor to the oxidized bacteriochlorophyll in the photophosphorylation pathway. However, it may also have a role in the respiratory chain and is found in some non-photosynthetic bacteria. This is Cytochrome c2 from Pararhodospirillum photometricum (Rhodospirillum photometricum).